Reading from the N-terminus, the 202-residue chain is MGHYVSLFITSVFIENMALAYFLGMCTFLAVSKKVSTAIGLGVAVVVVMAITVPLNNLLFQFILKDGALAWAGFPDIDLSFLGLLSYIGLIAATVQILEMFLDKFVPSLYNALGVFLPLITVNCAILGGVLFMVERDYNFGESVVYGVGAGFGWALAITALAGIREKLKYSDIPAPLRGLGITFITVGLMSLGFMSFGGMSI.

The next 6 helical transmembrane spans lie at 5–25, 35–55, 81–101, 114–134, 144–164, and 180–200; these read VSLF…FLGM, VSTA…TVPL, FLGL…LEMF, GVFL…LFMV, VVYG…LAGI, and LGIT…FGGM.

It belongs to the NqrDE/RnfAE family. Composed of six subunits; NqrA, NqrB, NqrC, NqrD, NqrE and NqrF.

The protein localises to the cell inner membrane. The catalysed reaction is a ubiquinone + n Na(+)(in) + NADH + H(+) = a ubiquinol + n Na(+)(out) + NAD(+). In terms of biological role, NQR complex catalyzes the reduction of ubiquinone-1 to ubiquinol by two successive reactions, coupled with the transport of Na(+) ions from the cytoplasm to the periplasm. NqrA to NqrE are probably involved in the second step, the conversion of ubisemiquinone to ubiquinol. The sequence is that of Na(+)-translocating NADH-quinone reductase subunit E from Psychrobacter arcticus (strain DSM 17307 / VKM B-2377 / 273-4).